The primary structure comprises 362 residues: Mitochondrial distribution and morphology protein 12 (362 aa).

The 361-residue stretch at 1-361 folds into the SMP-LTD domain; it reads MSFDINWSQL…WPSWLCFDMS (361 aa). Disordered stretches follow at residues 65–141 and 170–207; these read DFYE…AATP and TPSG…SKRG. 2 stretches are compositionally biased toward polar residues: residues 106–119 and 170–187; these read VTLS…TQFA and TPSG…MRTG. Low complexity predominate over residues 192–201; it reads PISNTPISSS.

The protein belongs to the MDM12 family. In terms of assembly, component of the ER-mitochondria encounter structure (ERMES) or MDM complex, composed of MMM1, MDM10, MDM12 and MDM34. An MMM1 homodimer associates with one molecule of MDM12 on each side in a pairwise head-to-tail manner, and the SMP-LTD domains of MMM1 and MDM12 generate a continuous hydrophobic tunnel for phospholipid trafficking.

Its subcellular location is the mitochondrion outer membrane. The protein resides in the endoplasmic reticulum membrane. Component of the ERMES/MDM complex, which serves as a molecular tether to connect the endoplasmic reticulum (ER) and mitochondria. Components of this complex are involved in the control of mitochondrial shape and protein biogenesis, and function in nonvesicular lipid trafficking between the ER and mitochondria. MDM12 is required for the interaction of the ER-resident membrane protein MMM1 and the outer mitochondrial membrane-resident beta-barrel protein MDM10. The MDM12-MMM1 subcomplex functions in the major beta-barrel assembly pathway that is responsible for biogenesis of all mitochondrial outer membrane beta-barrel proteins, and acts in a late step after the SAM complex. The MDM10-MDM12-MMM1 subcomplex further acts in the TOM40-specific pathway after the action of the MDM12-MMM1 complex. Essential for establishing and maintaining the structure of mitochondria and maintenance of mtDNA nucleoids. In Meyerozyma guilliermondii (strain ATCC 6260 / CBS 566 / DSM 6381 / JCM 1539 / NBRC 10279 / NRRL Y-324) (Yeast), this protein is Mitochondrial distribution and morphology protein 12.